A 446-amino-acid chain; its full sequence is Tubulin alpha chain-like 3 (446 aa).

Positions 1–4 (MREC) match the MREC motif motif. Residues Gln-11, Glu-78, Ser-147, Gly-151, Thr-152, Thr-186, Asn-213, and Asn-235 each coordinate GTP. Glu-78 is a binding site for Mg(2+). Residue Glu-261 is part of the active site.

The protein belongs to the tubulin family. In terms of assembly, dimer of alpha and beta chains. A typical microtubule is a hollow water-filled tube with an outer diameter of 25 nm and an inner diameter of 15 nM. Alpha-beta heterodimers associate head-to-tail to form protofilaments running lengthwise along the microtubule wall with the beta-tubulin subunit facing the microtubule plus end conferring a structural polarity. Microtubules usually have 13 protofilaments but different protofilament numbers can be found in some organisms and specialized cells. It depends on Mg(2+) as a cofactor. In terms of processing, some glutamate residues at the C-terminus are polyglycylated, resulting in polyglycine chains on the gamma-carboxyl group. Glycylation is mainly limited to tubulin incorporated into axonemes (cilia and flagella) whereas glutamylation is prevalent in neuronal cells, centrioles, axonemes, and the mitotic spindle. Both modifications can coexist on the same protein on adjacent residues, and lowering polyglycylation levels increases polyglutamylation, and reciprocally. Cilia and flagella glycylation is required for their stability and maintenance. Flagella glycylation controls sperm motility. Some glutamate residues at the C-terminus are polyglutamylated, resulting in polyglutamate chains on the gamma-carboxyl group. Polyglutamylation plays a key role in microtubule severing by spastin (SPAST). SPAST preferentially recognizes and acts on microtubules decorated with short polyglutamate tails: severing activity by SPAST increases as the number of glutamates per tubulin rises from one to eight, but decreases beyond this glutamylation threshold. Glutamylation is also involved in cilia motility.

It is found in the cytoplasm. The protein localises to the cytoskeleton. It catalyses the reaction GTP + H2O = GDP + phosphate + H(+). Functionally, tubulin is the major constituent of microtubules, a cylinder consisting of laterally associated linear protofilaments composed of alpha- and beta-tubulin heterodimers. Microtubules grow by the addition of GTP-tubulin dimers to the microtubule end, where a stabilizing cap forms. Below the cap, tubulin dimers are in GDP-bound state, owing to GTPase activity of alpha-tubulin. The protein is Tubulin alpha chain-like 3 (Tubal3) of Mus musculus (Mouse).